A 617-amino-acid chain; its full sequence is Proline--tRNA ligase (617 aa).

Belongs to the class-II aminoacyl-tRNA synthetase family. ProS type 1 subfamily. In terms of assembly, homodimer.

Its subcellular location is the cytoplasm. The enzyme catalyses tRNA(Pro) + L-proline + ATP = L-prolyl-tRNA(Pro) + AMP + diphosphate. In terms of biological role, catalyzes the attachment of proline to tRNA(Pro) in a two-step reaction: proline is first activated by ATP to form Pro-AMP and then transferred to the acceptor end of tRNA(Pro). As ProRS can inadvertently accommodate and process non-cognate amino acids such as alanine and cysteine, to avoid such errors it has two additional distinct editing activities against alanine. One activity is designated as 'pretransfer' editing and involves the tRNA(Pro)-independent hydrolysis of activated Ala-AMP. The other activity is designated 'posttransfer' editing and involves deacylation of mischarged Ala-tRNA(Pro). The misacylated Cys-tRNA(Pro) is not edited by ProRS. The protein is Proline--tRNA ligase of Streptococcus agalactiae serotype Ia (strain ATCC 27591 / A909 / CDC SS700).